The primary structure comprises 54 residues: Zinc-containing ferredoxin A (54 aa).

The segment at 1–21 (GIDPNYRTSRPEVGTHEGHKV) is disordered. The N-terminal extension stretch occupies residues 1-36 (GIDPNYRTSRPEVGTHEGHKVYGPVENPKVLGIHGA). Positions 9 to 20 (SRPEVGTHEGHK) are enriched in basic and acidic residues. Residues His-16 and His-19 each contribute to the Zn(2+) site. An N6-methyllysine modification is found at Lys-29. Residue His-34 coordinates Zn(2+). The 20-residue stretch at 35-54 (GAIVGVDFDLCIADGSCINA) folds into the 4Fe-4S ferredoxin-type 1 domain. Cys-45 and Cys-51 together coordinate [3Fe-4S] cluster.

The cofactor is [3Fe-4S] cluster. [4Fe-4S] cluster is required as a cofactor. Zn(2+) serves as cofactor.

In terms of biological role, ferredoxins are iron-sulfur proteins that transfer electrons in a wide variety of metabolic reactions. The protein is Zinc-containing ferredoxin A (zfx) of Sulfuracidifex metallicus (Sulfolobus metallicus).